The chain runs to 178 residues: Interleukin-10 (178 aa).

The first 18 residues, 1–18, serve as a signal peptide directing secretion; the sequence is MHSSALLCCLVLLTGVRA. Cystine bridges form between Cys30–Cys126 and Cys80–Cys132. The N-linked (GlcNAc...) asparagine glycan is linked to Asn134.

This sequence belongs to the IL-10 family. Homodimer. Interacts with IL10RA and IL10RB.

It localises to the secreted. In terms of biological role, major immune regulatory cytokine that acts on many cells of the immune system where it has profound anti-inflammatory functions, limiting excessive tissue disruption caused by inflammation. Mechanistically, IL10 binds to its heterotetrameric receptor comprising IL10RA and IL10RB leading to JAK1 and STAT2-mediated phosphorylation of STAT3. In turn, STAT3 translocates to the nucleus where it drives expression of anti-inflammatory mediators. Targets antigen-presenting cells (APCs) such as macrophages and monocytes and inhibits their release of pro-inflammatory cytokines including granulocyte-macrophage colony-stimulating factor /GM-CSF, granulocyte colony-stimulating factor/G-CSF, IL-1 alpha, IL-1 beta, IL-6, IL-8 and TNF-alpha. Also interferes with antigen presentation by reducing the expression of MHC-class II and co-stimulatory molecules, thereby inhibiting their ability to induce T cell activation. In addition, controls the inflammatory response of macrophages by reprogramming essential metabolic pathways including mTOR signaling. This chain is Interleukin-10 (IL10), found in Macaca mulatta (Rhesus macaque).